We begin with the raw amino-acid sequence, 290 residues long: Nucleotide-binding protein XF_1405 (290 aa).

ATP is bound at residue 13–20 (GLSGSGKS). 65-68 (DIRS) serves as a coordination point for GTP.

The protein belongs to the RapZ-like family.

In terms of biological role, displays ATPase and GTPase activities. This chain is Nucleotide-binding protein XF_1405, found in Xylella fastidiosa (strain 9a5c).